The primary structure comprises 265 residues: Thiazole synthase (265 aa).

Lys103 acts as the Schiff-base intermediate with DXP in catalysis. Residues Gly164, 190-191 (AG), and 212-213 (NT) each bind 1-deoxy-D-xylulose 5-phosphate.

This sequence belongs to the ThiG family. Homotetramer. Forms heterodimers with either ThiH or ThiS.

It localises to the cytoplasm. It carries out the reaction [ThiS sulfur-carrier protein]-C-terminal-Gly-aminoethanethioate + 2-iminoacetate + 1-deoxy-D-xylulose 5-phosphate = [ThiS sulfur-carrier protein]-C-terminal Gly-Gly + 2-[(2R,5Z)-2-carboxy-4-methylthiazol-5(2H)-ylidene]ethyl phosphate + 2 H2O + H(+). The protein operates within cofactor biosynthesis; thiamine diphosphate biosynthesis. Catalyzes the rearrangement of 1-deoxy-D-xylulose 5-phosphate (DXP) to produce the thiazole phosphate moiety of thiamine. Sulfur is provided by the thiocarboxylate moiety of the carrier protein ThiS. In vitro, sulfur can be provided by H(2)S. This is Thiazole synthase from Bordetella avium (strain 197N).